Reading from the N-terminus, the 234-residue chain is Large ribosomal subunit protein uL1c (234 aa).

Belongs to the universal ribosomal protein uL1 family. In terms of assembly, part of the 50S ribosomal subunit.

It is found in the plastid. Its subcellular location is the chloroplast. In terms of biological role, binds directly to 23S rRNA. Might be involved in E site tRNA release (Potential). The chain is Large ribosomal subunit protein uL1c (rpl1) from Guillardia theta (Cryptophyte).